Reading from the N-terminus, the 432-residue chain is Protein prenyltransferase alpha subunit repeat-containing protein 1-A (432 aa).

PFTA repeat units lie at residues 86-119 (ELID…TLNP), 121-154 (KDLQ…VQEL), 179-212 (EEMH…GNLK), 218-251 (DELS…LSKT), 294-327 (EEMD…HQLL), and 395-432 (SFDS…LQGH).

The protein belongs to the protein prenyltransferase subunit alpha family.

The polypeptide is Protein prenyltransferase alpha subunit repeat-containing protein 1-A (ptar1-a) (Xenopus laevis (African clawed frog)).